Here is a 354-residue protein sequence, read N- to C-terminus: tRNA N6-adenosine threonylcarbamoyltransferase (354 aa).

Residues His-115 and His-119 each contribute to the Fe cation site. Residues 138–142 (LVSGG), Asp-171, Gly-184, and Asn-276 contribute to the substrate site. Asp-304 lines the Fe cation pocket.

Belongs to the KAE1 / TsaD family. Fe(2+) serves as cofactor.

The protein resides in the cytoplasm. The catalysed reaction is L-threonylcarbamoyladenylate + adenosine(37) in tRNA = N(6)-L-threonylcarbamoyladenosine(37) in tRNA + AMP + H(+). Functionally, required for the formation of a threonylcarbamoyl group on adenosine at position 37 (t(6)A37) in tRNAs that read codons beginning with adenine. Is involved in the transfer of the threonylcarbamoyl moiety of threonylcarbamoyl-AMP (TC-AMP) to the N6 group of A37, together with TsaE and TsaB. TsaD likely plays a direct catalytic role in this reaction. The sequence is that of tRNA N6-adenosine threonylcarbamoyltransferase from Xanthomonas campestris pv. campestris (strain 8004).